Here is a 186-residue protein sequence, read N- to C-terminus: tRNA (cytidine(56)-2'-O)-methyltransferase (186 aa).

Residues L84 and 110-114 (GAEKV) each bind S-adenosyl-L-methionine.

This sequence belongs to the aTrm56 family. As to quaternary structure, homodimer.

It localises to the cytoplasm. The catalysed reaction is cytidine(56) in tRNA + S-adenosyl-L-methionine = 2'-O-methylcytidine(56) in tRNA + S-adenosyl-L-homocysteine + H(+). Specifically catalyzes the AdoMet-dependent 2'-O-ribose methylation of cytidine at position 56 in tRNAs. This Staphylothermus marinus (strain ATCC 43588 / DSM 3639 / JCM 9404 / F1) protein is tRNA (cytidine(56)-2'-O)-methyltransferase.